We begin with the raw amino-acid sequence, 243 residues long: 1-(5-phosphoribosyl)-5-[(5-phosphoribosylamino)methylideneamino] imidazole-4-carboxamide isomerase (243 aa).

Asp-8 serves as the catalytic Proton acceptor. Catalysis depends on Asp-129, which acts as the Proton donor.

The protein belongs to the HisA/HisF family.

It localises to the cytoplasm. It catalyses the reaction 1-(5-phospho-beta-D-ribosyl)-5-[(5-phospho-beta-D-ribosylamino)methylideneamino]imidazole-4-carboxamide = 5-[(5-phospho-1-deoxy-D-ribulos-1-ylimino)methylamino]-1-(5-phospho-beta-D-ribosyl)imidazole-4-carboxamide. The protein operates within amino-acid biosynthesis; L-histidine biosynthesis; L-histidine from 5-phospho-alpha-D-ribose 1-diphosphate: step 4/9. The protein is 1-(5-phosphoribosyl)-5-[(5-phosphoribosylamino)methylideneamino] imidazole-4-carboxamide isomerase of Nitratidesulfovibrio vulgaris (strain DSM 19637 / Miyazaki F) (Desulfovibrio vulgaris).